Here is a 128-residue protein sequence, read N- to C-terminus: Large ribosomal subunit protein bL12 (128 aa).

Belongs to the bacterial ribosomal protein bL12 family. Homodimer. Part of the ribosomal stalk of the 50S ribosomal subunit. Forms a multimeric L10(L12)X complex, where L10 forms an elongated spine to which 2 to 4 L12 dimers bind in a sequential fashion. Binds GTP-bound translation factors.

Functionally, forms part of the ribosomal stalk which helps the ribosome interact with GTP-bound translation factors. Is thus essential for accurate translation. The sequence is that of Large ribosomal subunit protein bL12 from Acidithiobacillus ferrooxidans (strain ATCC 23270 / DSM 14882 / CIP 104768 / NCIMB 8455) (Ferrobacillus ferrooxidans (strain ATCC 23270)).